The sequence spans 197 residues: MSSKEQKTPEGQAPEEIIMDQHEEIEAVEPEASAEQVDPRDEKIANLEAQLAEAQTRERDGILRVKAEMENLRRRTELDIEKAHKFALEKFINELLPVIDSLDRALEVADKANPDMSAMVEGIELTLKSMLDVVRKFGVEVIAETNVPLDPNVHQAIAMVESDDVAPGNVLGIMQKGYTLNGRTIRAAMVTVAKAKA.

The disordered stretch occupies residues 1–39; it reads MSSKEQKTPEGQAPEEIIMDQHEEIEAVEPEASAEQVDP.

Belongs to the GrpE family. In terms of assembly, homodimer.

It localises to the cytoplasm. Participates actively in the response to hyperosmotic and heat shock by preventing the aggregation of stress-denatured proteins, in association with DnaK and GrpE. It is the nucleotide exchange factor for DnaK and may function as a thermosensor. Unfolded proteins bind initially to DnaJ; upon interaction with the DnaJ-bound protein, DnaK hydrolyzes its bound ATP, resulting in the formation of a stable complex. GrpE releases ADP from DnaK; ATP binding to DnaK triggers the release of the substrate protein, thus completing the reaction cycle. Several rounds of ATP-dependent interactions between DnaJ, DnaK and GrpE are required for fully efficient folding. The chain is Protein GrpE from Escherichia coli O127:H6 (strain E2348/69 / EPEC).